Here is a 252-residue protein sequence, read N- to C-terminus: Imidazole glycerol phosphate synthase subunit HisF (252 aa).

Catalysis depends on residues Asp-11 and Asp-130.

This sequence belongs to the HisA/HisF family. In terms of assembly, heterodimer of HisH and HisF.

The protein resides in the cytoplasm. It catalyses the reaction 5-[(5-phospho-1-deoxy-D-ribulos-1-ylimino)methylamino]-1-(5-phospho-beta-D-ribosyl)imidazole-4-carboxamide + L-glutamine = D-erythro-1-(imidazol-4-yl)glycerol 3-phosphate + 5-amino-1-(5-phospho-beta-D-ribosyl)imidazole-4-carboxamide + L-glutamate + H(+). Its pathway is amino-acid biosynthesis; L-histidine biosynthesis; L-histidine from 5-phospho-alpha-D-ribose 1-diphosphate: step 5/9. Its function is as follows. IGPS catalyzes the conversion of PRFAR and glutamine to IGP, AICAR and glutamate. The HisF subunit catalyzes the cyclization activity that produces IGP and AICAR from PRFAR using the ammonia provided by the HisH subunit. The protein is Imidazole glycerol phosphate synthase subunit HisF of Hyphomonas neptunium (strain ATCC 15444).